The primary structure comprises 203 residues: Imidazoleglycerol-phosphate dehydratase (203 aa).

The protein belongs to the imidazoleglycerol-phosphate dehydratase family.

It localises to the cytoplasm. The catalysed reaction is D-erythro-1-(imidazol-4-yl)glycerol 3-phosphate = 3-(imidazol-4-yl)-2-oxopropyl phosphate + H2O. Its pathway is amino-acid biosynthesis; L-histidine biosynthesis; L-histidine from 5-phospho-alpha-D-ribose 1-diphosphate: step 6/9. The protein is Imidazoleglycerol-phosphate dehydratase of Salinispora arenicola (strain CNS-205).